A 454-amino-acid chain; its full sequence is UPF0210 protein EUBELI_01067 (454 aa).

The protein belongs to the UPF0210 family. In terms of assembly, homodimer.

This is UPF0210 protein EUBELI_01067 from Lachnospira eligens (strain ATCC 27750 / DSM 3376 / VPI C15-48 / C15-B4) (Eubacterium eligens).